The primary structure comprises 563 residues: uncharacterized protein (563 aa).

The interval Gln-30–Ile-303 is disordered. Positions Pro-36–Lys-56 are enriched in basic and acidic residues. A compositionally biased stretch (polar residues) spans Ser-61–Ile-72. Composition is skewed to basic and acidic residues over residues Thr-101–Gln-115, Glu-123–Pro-276, and Glu-282–Ile-303.

The protein belongs to the mimivirus L41 family.

This is an uncharacterized protein from Acanthamoeba polyphaga (Amoeba).